The following is a 202-amino-acid chain: N-(5'-phosphoribosyl)anthranilate isomerase (202 aa).

This sequence belongs to the TrpF family.

The enzyme catalyses N-(5-phospho-beta-D-ribosyl)anthranilate = 1-(2-carboxyphenylamino)-1-deoxy-D-ribulose 5-phosphate. The protein operates within amino-acid biosynthesis; L-tryptophan biosynthesis; L-tryptophan from chorismate: step 3/5. This is N-(5'-phosphoribosyl)anthranilate isomerase from Bacillus cereus (strain ATCC 14579 / DSM 31 / CCUG 7414 / JCM 2152 / NBRC 15305 / NCIMB 9373 / NCTC 2599 / NRRL B-3711).